Here is a 288-residue protein sequence, read N- to C-terminus: MAENKKAVQRRIRAVKSTQQITKAMKMVDAAKLRRAQEKVQNARPYSRELAKTLGRLIQAGAGIDHPLLHRRTEGTPTVAYVLLTADRGLAGAFNINVIRKAHQALQKESRPTKLITIGRKGRDYFVKRKIQPVLEFVNLGDNITFALARSVLSKIVDLYLSGEVDEVRVIYTEFVNAVTQRPKEMQLLPIQPAQADGAHTHVEYIYEPSPERVLDTLVPRYAETMFYQLMLESKASEHGARMTAMGNATDNAEEMIAKLTLAYNRARQAAITREISEIVGGANALQG.

The protein belongs to the ATPase gamma chain family. F-type ATPases have 2 components, CF(1) - the catalytic core - and CF(0) - the membrane proton channel. CF(1) has five subunits: alpha(3), beta(3), gamma(1), delta(1), epsilon(1). CF(0) has three main subunits: a, b and c.

The protein localises to the cell membrane. Produces ATP from ADP in the presence of a proton gradient across the membrane. The gamma chain is believed to be important in regulating ATPase activity and the flow of protons through the CF(0) complex. In Symbiobacterium thermophilum (strain DSM 24528 / JCM 14929 / IAM 14863 / T), this protein is ATP synthase gamma chain.